Reading from the N-terminus, the 68-residue chain is Large ribosomal subunit protein uL29 (68 aa).

The protein belongs to the universal ribosomal protein uL29 family.

The sequence is that of Large ribosomal subunit protein uL29 from Streptococcus sanguinis (strain SK36).